The following is a 194-amino-acid chain: Protein GrpE (194 aa).

A compositionally biased stretch (basic and acidic residues) spans 1-12 (MNKQKNNRERTP). Residues 1-44 (MNKQKNNRERTPQPEQDTERDEQLTNSHENDIDSAPAAEENDKV) form a disordered region.

The protein belongs to the GrpE family. As to quaternary structure, homodimer.

The protein localises to the cytoplasm. Its function is as follows. Participates actively in the response to hyperosmotic and heat shock by preventing the aggregation of stress-denatured proteins, in association with DnaK and GrpE. It is the nucleotide exchange factor for DnaK and may function as a thermosensor. Unfolded proteins bind initially to DnaJ; upon interaction with the DnaJ-bound protein, DnaK hydrolyzes its bound ATP, resulting in the formation of a stable complex. GrpE releases ADP from DnaK; ATP binding to DnaK triggers the release of the substrate protein, thus completing the reaction cycle. Several rounds of ATP-dependent interactions between DnaJ, DnaK and GrpE are required for fully efficient folding. The chain is Protein GrpE from Porphyromonas gingivalis (strain ATCC 33277 / DSM 20709 / CIP 103683 / JCM 12257 / NCTC 11834 / 2561).